The following is a 335-amino-acid chain: MFFDREKELSKLLKIIESEPSLITFIYGPINSGKTALIQEFIRKMPDHYVAFYINLRATPITKYEDFIDILFSIEFENPIKNLKEALSLVISAGKEILGIPIPNDFLKQILSENKPKNAFLYITKLLTEVKRRGKRPILILDELQVIGDLRINGPLIYEIFNFFIHLTKEAHLSHVFTITSDSLFMERIYSEAMLQGRADYFLVDDFDEKTALNFLKSQGLTEEEANLALEYFGGKPPYLIEAIKHREELEDYCKKALAMRTRQVYSFAYGKRRIIKLLTEFKNKEEVPFTGKVTRTLEEAVKANILFVDPLNGIIKPQGRLELLAIREALRMLT.

Position 28 to 35 (28 to 35 (GPINSGKT)) interacts with ATP.

It belongs to the archaeal ATPase family.

This is an uncharacterized protein from Pyrococcus abyssi (strain GE5 / Orsay).